Consider the following 358-residue polypeptide: MKHVDTEIPTEEQIHEAEKFGFHGQVQAAKIRFDRYFPGVLASITVAAAATFLSDHYGAPTMLFALLIGMAFRFLSEDESRALVGIQFASTTVLRIGVALLGMRITLGQIQSLGVKPVVMVFFSVLLTILFGLALSKMMGRGKRFGVLTGGSVGICGASAALAIAAVLPQDEYSERNTIFTVISITALSTLAMIAYPVVAQWFGLDHQAAGIFLGGTIHDVAQVVGAGYSVSEQTGDTATVIKLLRVSMLVPVVFILSLIFHKRNQKDGNAPRRTLLPPFIIFFVLFVGINSLGVVPKPATQFINDVSRWCLVTAIGALGMKTSLKSLFEVGWKPVSIMIAETVFLAVLVLGSVVWMS.

The next 10 membrane-spanning stretches (helical) occupy residues 36 to 53 (YFPG…ATFL), 57 to 76 (YGAP…RFLS), 83 to 105 (LVGI…GMRI), 115 to 134 (VKPV…FGLA), 146 to 168 (GVLT…AAVL), 178 to 200 (TIFT…PVVA), 244 to 261 (LLRV…SLIF), 276 to 295 (LLPP…SLGV), 307 to 325 (VSRW…KTSL), and 335 to 357 (PVSI…VVWM).

Belongs to the UPF0324 family.

It localises to the cell membrane. This is UPF0324 membrane protein CT0845 from Chlorobaculum tepidum (strain ATCC 49652 / DSM 12025 / NBRC 103806 / TLS) (Chlorobium tepidum).